We begin with the raw amino-acid sequence, 239 residues long: Probable transcriptional regulatory protein Ajs_1898 (239 aa).

Residues 1 to 21 are disordered; that stretch reads MAGHSKWANIQHRKGRQDEKR.

Belongs to the TACO1 family.

Its subcellular location is the cytoplasm. The polypeptide is Probable transcriptional regulatory protein Ajs_1898 (Acidovorax sp. (strain JS42)).